The sequence spans 188 residues: Putative nucleotidase OB0422 (188 aa).

Belongs to the 5'(3')-deoxyribonucleotidase family.

The chain is Putative nucleotidase OB0422 from Oceanobacillus iheyensis (strain DSM 14371 / CIP 107618 / JCM 11309 / KCTC 3954 / HTE831).